Reading from the N-terminus, the 195-residue chain is HTH-type transcriptional regulator TtmR (195 aa).

Residues 47-177 (DSQLCFAVYA…LLDNLASMRD (131 aa)) enclose the HTH marR-type domain. A DNA-binding region (H-T-H motif) is located at residues 93–116 (VKEIGSRLFLDSGTLTPLLKRLEA).

The protein resides in the cytoplasm. Functionally, formaldehyde-responsive transcription factor that modulates resistance to stress induced by formaldehyde. Impacts the expression of a number of genes encoding transcription factors and/or involved in stress response, including efgA, and which probably collectively trigger a formaldehyde-specific physiological response. Required for optimal transition to methylotrophy. Not involved in a general stress response. The protein is HTH-type transcriptional regulator TtmR of Methylorubrum extorquens (strain PA1) (Methylobacterium extorquens).